The chain runs to 185 residues: Peptidyl-tRNA hydrolase (185 aa).

Y14 is a binding site for tRNA. Residue H19 is the Proton acceptor of the active site. Y65, N67, and N113 together coordinate tRNA.

The protein belongs to the PTH family. In terms of assembly, monomer.

It localises to the cytoplasm. It catalyses the reaction an N-acyl-L-alpha-aminoacyl-tRNA + H2O = an N-acyl-L-amino acid + a tRNA + H(+). Functionally, hydrolyzes ribosome-free peptidyl-tRNAs (with 1 or more amino acids incorporated), which drop off the ribosome during protein synthesis, or as a result of ribosome stalling. Its function is as follows. Catalyzes the release of premature peptidyl moieties from peptidyl-tRNA molecules trapped in stalled 50S ribosomal subunits, and thus maintains levels of free tRNAs and 50S ribosomes. This chain is Peptidyl-tRNA hydrolase, found in Rickettsia canadensis (strain McKiel).